Reading from the N-terminus, the 629-residue chain is Arginine--tRNA ligase (629 aa).

The 'HIGH' region motif lies at 128 to 138 (VNPTKPLHMGH).

This sequence belongs to the class-I aminoacyl-tRNA synthetase family.

It localises to the cytoplasm. The catalysed reaction is tRNA(Arg) + L-arginine + ATP = L-arginyl-tRNA(Arg) + AMP + diphosphate. The protein is Arginine--tRNA ligase of Pyrococcus furiosus (strain ATCC 43587 / DSM 3638 / JCM 8422 / Vc1).